The following is a 208-amino-acid chain: Small ribosomal subunit protein uS5 (208 aa).

Polar residues predominate over residues 1–19 (MTDSNNQSPNKKTSGSSGA). The disordered stretch occupies residues 1 to 54 (MTDSNNQSPNKKTSGSSGAPTAADGRQENRRSRGEKRGGRRDRRGQERDSEWQE). Basic and acidic residues-rich tracts occupy residues 25-37 (GRQENRRSRGEKR) and 44-54 (RGQERDSEWQE). One can recognise an S5 DRBM domain in the interval 52–115 (WQERVVQIRR…ADGKKHLVRV (64 aa)).

This sequence belongs to the universal ribosomal protein uS5 family. As to quaternary structure, part of the 30S ribosomal subunit. Contacts proteins S4 and S8.

Functionally, with S4 and S12 plays an important role in translational accuracy. Located at the back of the 30S subunit body where it stabilizes the conformation of the head with respect to the body. This is Small ribosomal subunit protein uS5 from Prochlorococcus marinus (strain NATL1A).